Reading from the N-terminus, the 369-residue chain is UDP-N-acetyl-3-dehydro-alpha-D-glucosamine 3-aminotranferase (369 aa).

The residue at position 190 (K190) is an N6-(pyridoxal phosphate)lysine.

Belongs to the DegT/DnrJ/EryC1 family. Pyridoxal 5'-phosphate serves as cofactor.

It catalyses the reaction UDP-2-acetamido-3-amino-2,3-dideoxy-alpha-D-glucopyranose + 2-oxoglutarate = UDP-2-acetamido-3-dehydro-2-deoxy-alpha-D-glucopyranose + L-glutamate. It functions in the pathway bacterial outer membrane biogenesis; LPS lipid A biosynthesis. In terms of biological role, aminotranferase involved in the synthesis of 2,3-diamino-2,3-dideoxy-D-glucopyranose (GlcN3N), which is a component of lipid A in some species. Catalyzes the amination of UDP-2-acetamido-3-dehydro-2-deoxy-alpha-D-glucopyranose (UDP-3-oxo-GlcNAc) to UDP-2-acetamido-3-amino-2,3-dideoxy-alpha-D-glucopyranose (UDP-GlcNAc3N), using L-glutamate as the amine donor. Other amine donors, such as alanine and glutamine, can substitute for glutamate, but product formation is slower. This is UDP-N-acetyl-3-dehydro-alpha-D-glucosamine 3-aminotranferase from Acidithiobacillus ferrooxidans (strain ATCC 23270 / DSM 14882 / CIP 104768 / NCIMB 8455) (Ferrobacillus ferrooxidans (strain ATCC 23270)).